The sequence spans 305 residues: Mitochondrial brown fat uncoupling protein 1 (305 aa).

Over 1–10 (MVGHAATDVP) the chain is Mitochondrial intermembrane. A helical membrane pass occupies residues 11–32 (PTMAVKIFSAGVAACVADIITF). Solcar repeat units follow at residues 11 to 102 (PTMA…VQEF), 109 to 199 (ASLG…MKEA), and 208 to 293 (DDVP…LKRE). Residues 33-73 (PLDTAKVRLQIQGECLTSSAFRYKGVLGTIITLAKTEGPVK) are Mitochondrial matrix-facing. Lys56 is a fatty acid 16:0 binding site. The chain crosses the membrane as a helical span at residues 74-96 (LYSGLPAGLQRQISFASLRIGLY). Topologically, residues 97-114 (DTVQEFFTTGKEASLGSK) are mitochondrial intermembrane. A helical membrane pass occupies residues 115–131 (ISAGLTTGGVAVFIGQP). Residues 132-176 (TEVVKVRLQAQSHLHGPKPRYTGTYNAYRIIATTEGLTGLWKGTT) lie on the Mitochondrial matrix side of the membrane. A helical transmembrane segment spans residues 177 to 193 (PNLTRNVIINCTELVTY). The Mitochondrial intermembrane segment spans residues 194 to 210 (DLMKEALVKNKLLADDV). Residues 211–230 (PCHFVSAVVAGFCTTVLSSP) form a helical membrane-spanning segment. The Mitochondrial matrix portion of the chain corresponds to 231-264 (VDVVKTRFVNSSPGQYTSVPNCAMMMLTREGPSA). A Cysteine sulfenic acid (-SOH) modification is found at Cys252. A helical membrane pass occupies residues 265-287 (FFKGFVPSFLRLGSWNIIMFVCF). Fatty acid 16:0 is bound at residue Lys267. Topologically, residues 288–305 (EQLKRELMKSRQAMDCAT) are mitochondrial intermembrane.

It belongs to the mitochondrial carrier (TC 2.A.29) family. As to quaternary structure, most probably functions as a monomer. Binds one purine nucleotide per monomer. However, has also been suggested to function as a homodimer or a homotetramer. Tightly associates with cardiolipin in the mitochondrion inner membrane; may stabilize and regulate its activity. In terms of processing, may undergo sulfenylation upon cold exposure. May increase the sensitivity of UCP1 thermogenic function to the activation by noradrenaline probably through structural effects. Post-translationally, may undergo ubiquitin-mediated proteasomal degradation.

The protein resides in the mitochondrion inner membrane. It carries out the reaction H(+)(in) = H(+)(out). With respect to regulation, has no constitutive proton transporter activity and has to be activated by long-chain fatty acids/LCFAs. Inhibited by purine nucleotides. Both purine nucleotides and LCFAs bind the cytosolic side of the transporter and directly compete to activate or inhibit it. Activated by noradrenaline and reactive oxygen species. Despite lacking canonical translational encoding for selenocysteine, a small pool of the protein has been observed to selectively incorporate selenocysteine at 'Cys-252'. Selenocysteine-modified protein is highly sensitive to redox modification and may constitute a pool of protein highly sensitive to activation by elevated levels of reactive oxygen species (ROS). In terms of biological role, mitochondrial protein responsible for thermogenic respiration, a specialized capacity of brown adipose tissue and beige fat that participates in non-shivering adaptive thermogenesis to temperature and diet variations and more generally to the regulation of energy balance. Functions as a long-chain fatty acid/LCFA and proton symporter, simultaneously transporting one LCFA and one proton through the inner mitochondrial membrane. However, LCFAs remaining associated with the transporter via their hydrophobic tails, it results in an apparent transport of protons activated by LCFAs. Thereby, dissipates the mitochondrial proton gradient and converts the energy of substrate oxydation into heat instead of ATP. Regulates the production of reactive oxygen species/ROS by mitochondria. The chain is Mitochondrial brown fat uncoupling protein 1 from Ovis aries (Sheep).